The primary structure comprises 591 residues: Autotransporter adhesin NhhA (591 aa).

Residues 1–51 (MNKIYRIIWNSALNAWVVVSELTRNHTKRASATVKTAVLATLLFATVQASA) form the signal peptide. The surface exposed passenger domain stretch occupies residues 52 to 503 (NNEEQEEDLY…TNVAQLKGVA (452 aa)). The translocator domain stretch occupies residues 504-591 (QNLNNRIDNV…GASASVGYQW (88 aa)). Transmembrane regions (beta stranded) follow at residues 537-547 (GKSMMAIGGGT), 551-561 (EAGYAIGYSSI), 570-576 (KGTASGN), and 580-591 (HFGASASVGYQW).

The protein belongs to the autotransporter-2 (AT-2) (TC 1.B.40) family. As to quaternary structure, homotrimer.

Its subcellular location is the cell surface. It localises to the cell outer membrane. Involved in adhesion of capsulated meningococci to host epithelial cells. Interacts with laminin and heparan sulfate, promoting the adherence to the extracellular matrix (ECM) components. The protein is Autotransporter adhesin NhhA of Neisseria meningitidis serogroup B (strain ATCC BAA-335 / MC58).